Consider the following 118-residue polypeptide: Small ribosomal subunit protein uS13 (118 aa).

The segment at 94 to 118 (SLPVRGQRSKTNARTRKGPRKAIKK) is disordered.

This sequence belongs to the universal ribosomal protein uS13 family. As to quaternary structure, part of the 30S ribosomal subunit. Forms a loose heterodimer with protein S19. Forms two bridges to the 50S subunit in the 70S ribosome.

Functionally, located at the top of the head of the 30S subunit, it contacts several helices of the 16S rRNA. In the 70S ribosome it contacts the 23S rRNA (bridge B1a) and protein L5 of the 50S subunit (bridge B1b), connecting the 2 subunits; these bridges are implicated in subunit movement. Contacts the tRNAs in the A and P-sites. The polypeptide is Small ribosomal subunit protein uS13 (Psychromonas ingrahamii (strain DSM 17664 / CCUG 51855 / 37)).